Reading from the N-terminus, the 328-residue chain is D-cysteine desulfhydrase (328 aa).

The residue at position 51 (Lys51) is an N6-(pyridoxal phosphate)lysine.

The protein belongs to the ACC deaminase/D-cysteine desulfhydrase family. In terms of assembly, homodimer. Requires pyridoxal 5'-phosphate as cofactor.

It carries out the reaction D-cysteine + H2O = hydrogen sulfide + pyruvate + NH4(+) + H(+). Functionally, catalyzes the alpha,beta-elimination reaction of D-cysteine and of several D-cysteine derivatives. It could be a defense mechanism against D-cysteine. The polypeptide is D-cysteine desulfhydrase (Salmonella choleraesuis (strain SC-B67)).